The primary structure comprises 122 residues: Large ribosomal subunit protein uL14 (122 aa).

Belongs to the universal ribosomal protein uL14 family. In terms of assembly, part of the 50S ribosomal subunit. Forms a cluster with proteins L3 and L19. In the 70S ribosome, L14 and L19 interact and together make contacts with the 16S rRNA in bridges B5 and B8.

Its function is as follows. Binds to 23S rRNA. Forms part of two intersubunit bridges in the 70S ribosome. The protein is Large ribosomal subunit protein uL14 of Azorhizobium caulinodans (strain ATCC 43989 / DSM 5975 / JCM 20966 / LMG 6465 / NBRC 14845 / NCIMB 13405 / ORS 571).